The chain runs to 320 residues: Myoblast determination protein 1 (320 aa).

Residue Met1 forms a Peptide (Met-Gly) (interchain with G-Cter in ubiquitin) linkage. N6-methyllysine; by EHMT2 is present on Lys104. In terms of domain architecture, bHLH spans 109 to 160 (DRRKAATMRERRRLSKVNEAFETLKRCTSSNPNQRLPKVEILRNAIRYIEGL). 2 disordered regions span residues 174-219 (AAAA…PPSG) and 262-320 (ESPA…YQVL). Polar residues-rich tracts occupy residues 197-207 (SDASSPRSNCS) and 291-301 (GESSGDPTQSP).

Efficient DNA binding requires dimerization with another bHLH protein. Seems to form active heterodimers with ITF-2. Interacts with SUV39H1. Interacts with DDX5. Interacts with CHD2. Interacts with TSC22D3. Interacts with SETD3. Interacts with P-TEFB complex; promotes the transcriptional activity of MYOD1 through its CDK9-mediated phosphorylation. Interacts with CSRP3. Interacts with NUPR1. Post-translationally, phosphorylated by CDK9. This phosphorylation promotes its function in muscle differentiation. Acetylated by a complex containing EP300 and PCAF. The acetylation is essential to activate target genes. Conversely, its deacetylation by SIRT1 inhibits its function. In terms of processing, ubiquitinated on the N-terminus; which is required for proteasomal degradation. Post-translationally, methylation at Lys-104 by EHMT2/G9a inhibits myogenic activity.

It is found in the nucleus. Its function is as follows. Acts as a transcriptional activator that promotes transcription of muscle-specific target genes and plays a role in muscle differentiation. Together with MYF5 and MYOG, co-occupies muscle-specific gene promoter core region during myogenesis. Induces fibroblasts to differentiate into myoblasts. Interacts with and is inhibited by the twist protein. This interaction probably involves the basic domains of both proteins. The chain is Myoblast determination protein 1 (MYOD1) from Homo sapiens (Human).